An 83-amino-acid polypeptide reads, in one-letter code: Large ribosomal subunit protein bL31B (83 aa).

This sequence belongs to the bacterial ribosomal protein bL31 family. Type B subfamily. Part of the 50S ribosomal subunit.

This chain is Large ribosomal subunit protein bL31B, found in Bacteroides fragilis (strain ATCC 25285 / DSM 2151 / CCUG 4856 / JCM 11019 / LMG 10263 / NCTC 9343 / Onslow / VPI 2553 / EN-2).